The primary structure comprises 707 residues: DNA ligase (707 aa).

The tract at residues 1–23 (MSSKATQDPEAVLAEQSDDATEA) is disordered. NAD(+) is bound by residues 53 to 57 (DAEFD), 103 to 104 (SL), and glutamate 133. The N6-AMP-lysine intermediate role is filled by lysine 135. Residues arginine 156, glutamate 196, lysine 315, and lysine 339 each contribute to the NAD(+) site. Zn(2+) is bound by residues cysteine 433, cysteine 436, cysteine 452, and cysteine 458. Positions 622-707 (SIERTLDGLS…LENGPDTPDS (86 aa)) constitute a BRCT domain.

The protein belongs to the NAD-dependent DNA ligase family. LigA subfamily. Mg(2+) serves as cofactor. Mn(2+) is required as a cofactor.

It carries out the reaction NAD(+) + (deoxyribonucleotide)n-3'-hydroxyl + 5'-phospho-(deoxyribonucleotide)m = (deoxyribonucleotide)n+m + AMP + beta-nicotinamide D-nucleotide.. DNA ligase that catalyzes the formation of phosphodiester linkages between 5'-phosphoryl and 3'-hydroxyl groups in double-stranded DNA using NAD as a coenzyme and as the energy source for the reaction. It is essential for DNA replication and repair of damaged DNA. The sequence is that of DNA ligase from Mycolicibacterium vanbaalenii (strain DSM 7251 / JCM 13017 / BCRC 16820 / KCTC 9966 / NRRL B-24157 / PYR-1) (Mycobacterium vanbaalenii).